A 424-amino-acid polypeptide reads, in one-letter code: Appressorium protein ROW1 (424 aa).

The signal sequence occupies residues 1-21 (MTKLTLTVALVSALLASGASA). 4 disordered regions span residues 19–54 (ASAQ…WQPK), 69–90 (ANRI…GYNT), 278–304 (SGST…CSSV), and 327–398 (SSSA…TQGA). At 22-403 (QQPTGTGNGP…NTQGAASSAS (382 aa)) the chain is on the extracellular side. Residues 37-54 (TDLNRNQPTKSWTQWQPK) show a composition bias toward polar residues. Low complexity-rich tracts occupy residues 295–304 (APSSSQCSSV) and 327–347 (SSSA…SASS). Over residues 362-382 (SGTGSGSGSGSGSGSGSGSGS) the composition is skewed to gly residues. The segment covering 383–398 (SSGSSSSGSSSNTQGA) has biased composition (low complexity). A helical transmembrane segment spans residues 404-424 (SLTISVGLAGLVAIGAAAFAL).

The protein resides in the cell membrane. The protein localises to the secreted. Its function is as follows. Plays a role in the formation of the appressorium, a specialized infection structure with the purpose of penetrating the host surface, and is required for proper remodeling of the appressorium wall and vesicle secretion. This Mycosarcoma maydis (Corn smut fungus) protein is Appressorium protein ROW1.